A 315-amino-acid chain; its full sequence is 31 kDa ribonucleoprotein, chloroplastic (315 aa).

Residues 1–71 (MSCATKPIIK…LSPKKKTSVS (71 aa)) constitute a chloroplast transit peptide. The segment at 114–133 (AGESDEVEADEEEEEFQEPP) is disordered. Over residues 115–133 (GESDEVEADEEEEEFQEPP) the composition is skewed to acidic residues. RRM domains are found at residues 136–214 (AKLF…KAAR) and 230–308 (YRIY…VAED).

It localises to the plastid. Its subcellular location is the chloroplast. In terms of biological role, could be involved in splicing and/or processing of chloroplast RNA's. The chain is 31 kDa ribonucleoprotein, chloroplastic from Nicotiana sylvestris (Wood tobacco).